The following is a 199-amino-acid chain: Hematopoietic prostaglandin D synthase (199 aa).

The GST N-terminal domain maps to 2 to 79 (PNYKLTYFNL…YLARESGLAG (78 aa)). Residues tyrosine 8, arginine 14, tryptophan 39, 49–51 (GKV), and 63–64 (QS) each bind glutathione. Positions 81–199 (TPVEQALADA…WIQKRPKTAI (119 aa)) constitute a GST C-terminal domain.

It belongs to the GST superfamily. Sigma family. Requires glutathione as cofactor. In terms of tissue distribution, highly expressed in liver, kidney, small intestine and colon, moderately in pancreas, bone marrow, lung and ovary, and expressed at low levels in spleen, thymus, heart and brain. Not detected in oviduct or skin (at protein level). Expressed in liver.

It localises to the cytoplasm. It catalyses the reaction prostaglandin H2 = prostaglandin D2. It carries out the reaction RX + glutathione = an S-substituted glutathione + a halide anion + H(+). The enzyme catalyses 2-glyceryl-prostaglandin H2 = 2-glyceryl-prostaglandin D2. Its function is as follows. Bifunctional enzyme which catalyzes both the conversion of PGH2 to PGD2, a prostaglandin involved in smooth muscle contraction/relaxation and a potent inhibitor of platelet aggregation, and the conjugation of glutathione with a wide range of aryl halides, organic isothiocyanates and alpha,beta-unsaturated carbonyls. Also exhibits low glutathione-peroxidase activity towards cumene hydroperoxide and t-butyl hydroperoxide. The chain is Hematopoietic prostaglandin D synthase (HPGDS) from Gallus gallus (Chicken).